The sequence spans 210 residues: LexA repressor (210 aa).

A DNA-binding region (H-T-H motif) is located at residues 29-49 (VREIGEAVDLSSTSTVHGHIS). Residues Ser130 and Lys168 each act as for autocatalytic cleavage activity in the active site.

It belongs to the peptidase S24 family. Homodimer.

The enzyme catalyses Hydrolysis of Ala-|-Gly bond in repressor LexA.. Its function is as follows. Represses a number of genes involved in the response to DNA damage (SOS response), including recA and lexA. In the presence of single-stranded DNA, RecA interacts with LexA causing an autocatalytic cleavage which disrupts the DNA-binding part of LexA, leading to derepression of the SOS regulon and eventually DNA repair. This chain is LexA repressor, found in Lactiplantibacillus plantarum (strain ATCC BAA-793 / NCIMB 8826 / WCFS1) (Lactobacillus plantarum).